A 1092-amino-acid chain; its full sequence is DNA polymerase delta catalytic subunit (1092 aa).

Residues 1–71 (MDGKRKFNGT…SRPPPPELDP (71 aa)) are disordered. A Nuclear localization signal motif is present at residues 4–19 (KRKFNGTSNGHAKKPR). 4 residues coordinate Zn(2+): Cys997, Cys1000, Cys1014, and Cys1017. The CysA-type zinc finger occupies 997-1017 (CLGCKSLMPKGYEQACLCPHC). Cys1046, Cys1049, Cys1059, and Cys1064 together coordinate [4Fe-4S] cluster. Positions 1046 to 1064 (CQRCQESLHEEVICSNRDC) match the CysB motif motif.

It belongs to the DNA polymerase type-B family. As to quaternary structure, catalytic component of the DNA polymerase delta complex consisting of three subunits: the catalytic subunit PolD1 and two accessory subunits PolD2/Pol31 and PolD3/Pol32. Within the delta complex, interacts with both PolD2 and PolD3, and is able to interact with PolD2 in the absence of PolD3. Interacts with PCNA and PCNA2. The cofactor is [4Fe-4S] cluster. Requires Mg(2+) as cofactor. Expressed in ovaries (at the protein level). Expressed in embryos (at the protein level).

It localises to the nucleus. The protein localises to the nucleoplasm. The catalysed reaction is DNA(n) + a 2'-deoxyribonucleoside 5'-triphosphate = DNA(n+1) + diphosphate. Its activity is regulated as follows. Inhibited by KCL. Also inhibited by carbonyldiphosphonate, aphidicolin and N-ethylmaleimide (NEM). In terms of biological role, as the catalytic component of the DNA polymerase delta complex, plays a crucial role in high fidelity genome replication, including lagging strand synthesis, DNA recombination and repair. Exhibits both DNA polymerase and 3'- to 5'-exonuclease activities. Required at the nucleus of rapidly dividing embryonic cells to activate genome replication during the earliest cell cycles. Likely to require the presence of accessory proteins PolD2 and PolD3 for full activity. This Drosophila melanogaster (Fruit fly) protein is DNA polymerase delta catalytic subunit.